Here is a 427-residue protein sequence, read N- to C-terminus: Trigger factor (427 aa).

Positions 163–248 (GDTVVIDFVG…VHEVKSKEVP (86 aa)) constitute a PPIase FKBP-type domain.

Belongs to the FKBP-type PPIase family. Tig subfamily.

The protein localises to the cytoplasm. It carries out the reaction [protein]-peptidylproline (omega=180) = [protein]-peptidylproline (omega=0). In terms of biological role, involved in protein export. Acts as a chaperone by maintaining the newly synthesized protein in an open conformation. Functions as a peptidyl-prolyl cis-trans isomerase. This is Trigger factor from Streptococcus uberis (strain ATCC BAA-854 / 0140J).